A 364-amino-acid chain; its full sequence is Lipoyl synthase, mitochondrial (364 aa).

7 residues coordinate [4Fe-4S] cluster: cysteine 99, cysteine 104, cysteine 110, cysteine 130, cysteine 134, cysteine 137, and serine 345. In terms of domain architecture, Radical SAM core spans 116 to 334 (HSTQTATIML…EQRGNELGFL (219 aa)).

It belongs to the radical SAM superfamily. Lipoyl synthase family. [4Fe-4S] cluster is required as a cofactor.

It is found in the mitochondrion. It carries out the reaction [[Fe-S] cluster scaffold protein carrying a second [4Fe-4S](2+) cluster] + N(6)-octanoyl-L-lysyl-[protein] + 2 oxidized [2Fe-2S]-[ferredoxin] + 2 S-adenosyl-L-methionine + 4 H(+) = [[Fe-S] cluster scaffold protein] + N(6)-[(R)-dihydrolipoyl]-L-lysyl-[protein] + 4 Fe(3+) + 2 hydrogen sulfide + 2 5'-deoxyadenosine + 2 L-methionine + 2 reduced [2Fe-2S]-[ferredoxin]. Its pathway is protein modification; protein lipoylation via endogenous pathway; protein N(6)-(lipoyl)lysine from octanoyl-[acyl-carrier-protein]: step 2/2. Its function is as follows. Catalyzes the radical-mediated insertion of two sulfur atoms into the C-6 and C-8 positions of the octanoyl moiety bound to the lipoyl domains of lipoate-dependent enzymes, thereby converting the octanoylated domains into lipoylated derivatives. The sequence is that of Lipoyl synthase, mitochondrial from Drosophila mojavensis (Fruit fly).